A 192-amino-acid polypeptide reads, in one-letter code: GTP cyclohydrolase-2 (192 aa).

50 to 54 (RLHSE) is a binding site for GTP. Residues Cys-55, Cys-66, and Cys-68 each contribute to the Zn(2+) site. GTP is bound by residues 92 to 94 (EGR) and Thr-114. Asp-126 functions as the Proton acceptor in the catalytic mechanism. Arg-128 (nucleophile) is an active-site residue. Thr-149 and Lys-154 together coordinate GTP.

It belongs to the GTP cyclohydrolase II family. The cofactor is Zn(2+).

It carries out the reaction GTP + 4 H2O = 2,5-diamino-6-hydroxy-4-(5-phosphoribosylamino)-pyrimidine + formate + 2 phosphate + 3 H(+). Its pathway is cofactor biosynthesis; riboflavin biosynthesis; 5-amino-6-(D-ribitylamino)uracil from GTP: step 1/4. Catalyzes the conversion of GTP to 2,5-diamino-6-ribosylamino-4(3H)-pyrimidinone 5'-phosphate (DARP), formate and pyrophosphate. The polypeptide is GTP cyclohydrolase-2 (Helicobacter pylori (strain P12)).